The sequence spans 180 residues: Transcription factor HES-7.1-A (180 aa).

The bHLH domain occupies 13–70 (HRKLLKPLVEKRRRERINNSLEKLRIFLFQTLKSEKLKNPKVEKAEILECTVQFLQSR). The region spanning 84–116 (YQSGFQHCLETTLHFMNSKPDMNGVTKELLSHQ) is the Orange domain. Positions 176 to 179 (WRPW) match the WRPW motif motif.

Transcription repression requires formation of a complex with a corepressor protein of the Groucho/TLE family. In terms of tissue distribution, expressed in the presumptive midbrain-hindbrain boundary (MHB) as early as the early gastrula stage (stage 10.5). Expression in the MHB continues through to tailbud stage. Also transiently expressed in the eye anlage at late neurula stage.

The protein localises to the nucleus. Functionally, transcriptional repressor. Represses transcription from both N box- and E box-containing promoters. Demarcates the prospective midbrain-hindbrain boundary (MHB) region in the neuroectoderm in early gastrulae embryos by repressing transcription of a number of target genes. The polypeptide is Transcription factor HES-7.1-A (hes7.1-a) (Xenopus laevis (African clawed frog)).